The primary structure comprises 293 residues: NAD kinase (293 aa).

Catalysis depends on aspartate 74, which acts as the Proton acceptor. NAD(+) is bound by residues 74-75, 148-149, histidine 159, arginine 176, aspartate 178, threonine 186, 189-194, and glutamine 248; these read DG, NE, and TAYSLS.

It belongs to the NAD kinase family. In terms of assembly, homodimer. A divalent metal cation is required as a cofactor.

It localises to the cytoplasm. The catalysed reaction is NAD(+) + ATP = ADP + NADP(+) + H(+). Involved in the regulation of the intracellular balance of NAD and NADP, and is a key enzyme in the biosynthesis of NADP. Catalyzes specifically the phosphorylation on 2'-hydroxyl of the adenosine moiety of NAD to yield NADP. In Yersinia pestis, this protein is NAD kinase.